The sequence spans 554 residues: Wee1-like protein kinase 2-B (554 aa).

Disordered regions lie at residues methionine 1–cysteine 86 and threonine 145–methionine 182. Phosphoserine is present on serine 38. Composition is skewed to polar residues over residues serine 38 to cysteine 48 and valine 147 to glutamine 163. A Protein kinase domain is found at phenylalanine 213–valine 487. Residues isoleucine 219–valine 227 and lysine 242 contribute to the ATP site. Catalysis depends on aspartate 340, which acts as the Proton acceptor. Residues asparagine 345 and aspartate 377 each contribute to the Mg(2+) site. Positions alanine 490 to leucine 516 form a coiled coil.

The protein belongs to the protein kinase superfamily. Ser/Thr protein kinase family. WEE1 subfamily. Interacts with cdca3. In terms of processing, ubiquitinated and degraded at the onset of G2/M phase. Phosphorylated during M and G1 phases. Interacts with cdca3 when phosphorylated at Ser-38.

It is found in the nucleus. It carries out the reaction L-tyrosyl-[protein] + ATP = O-phospho-L-tyrosyl-[protein] + ADP + H(+). In terms of biological role, oocyte and early embryo-specific protein tyrosine kinase that phosphorylates and inhibits cdk1 and acts as a regulator of meiosis in oocytes. Required to ensure the meiotic cell cycle in oocytes by phosphorylating cdk1 at 'Tyr-15', leading to inhibit cdk1 activity and prevent meiosis. The polypeptide is Wee1-like protein kinase 2-B (wee2-b) (Xenopus laevis (African clawed frog)).